A 105-amino-acid polypeptide reads, in one-letter code: Large ribosomal subunit protein uL24 (105 aa).

This sequence belongs to the universal ribosomal protein uL24 family. Part of the 50S ribosomal subunit.

In terms of biological role, one of two assembly initiator proteins, it binds directly to the 5'-end of the 23S rRNA, where it nucleates assembly of the 50S subunit. One of the proteins that surrounds the polypeptide exit tunnel on the outside of the subunit. The chain is Large ribosomal subunit protein uL24 from Mycobacterium tuberculosis (strain CDC 1551 / Oshkosh).